Consider the following 437-residue polypeptide: Phosphomethylpyrimidine synthase (437 aa).

Substrate-binding positions include Asn69, Met98, Tyr127, His163, 185–187 (SRG), 226–229 (DACR), and Glu265. Residue His269 participates in Zn(2+) binding. Tyr292 is a binding site for substrate. His333 contributes to the Zn(2+) binding site. [4Fe-4S] cluster contacts are provided by Cys409, Cys412, and Cys416.

Belongs to the ThiC family. It depends on [4Fe-4S] cluster as a cofactor.

The catalysed reaction is 5-amino-1-(5-phospho-beta-D-ribosyl)imidazole + S-adenosyl-L-methionine = 4-amino-2-methyl-5-(phosphooxymethyl)pyrimidine + CO + 5'-deoxyadenosine + formate + L-methionine + 3 H(+). It functions in the pathway cofactor biosynthesis; thiamine diphosphate biosynthesis. Catalyzes the synthesis of the hydroxymethylpyrimidine phosphate (HMP-P) moiety of thiamine from aminoimidazole ribotide (AIR) in a radical S-adenosyl-L-methionine (SAM)-dependent reaction. This chain is Phosphomethylpyrimidine synthase, found in Clostridium botulinum (strain Kyoto / Type A2).